Reading from the N-terminus, the 141-residue chain is Endoribonuclease YbeY (141 aa).

The Zn(2+) site is built by histidine 105, histidine 109, and aspartate 115.

The protein belongs to the endoribonuclease YbeY family. Zn(2+) serves as cofactor.

It is found in the cytoplasm. Its function is as follows. Single strand-specific metallo-endoribonuclease involved in late-stage 70S ribosome quality control and in maturation of the 3' terminus of the 16S rRNA. In Chloroherpeton thalassium (strain ATCC 35110 / GB-78), this protein is Endoribonuclease YbeY.